Consider the following 140-residue polypeptide: L-fucose mutarotase (140 aa).

The active-site Proton donor is His22. Substrate contacts are provided by residues Asp30, Arg107, and 129-131 (YGN).

The protein belongs to the RbsD / FucU family. FucU mutarotase subfamily. As to quaternary structure, homodecamer.

It localises to the cytoplasm. It carries out the reaction alpha-L-fucose = beta-L-fucose. It functions in the pathway carbohydrate metabolism; L-fucose metabolism. Involved in the anomeric conversion of L-fucose. The polypeptide is L-fucose mutarotase (Citrobacter koseri (strain ATCC BAA-895 / CDC 4225-83 / SGSC4696)).